The sequence spans 111 residues: 2Fe-2S ferredoxin (111 aa).

A 2Fe-2S ferredoxin-type domain is found at 1 to 104 (MPKIFFLPHK…DIEVQIPLYN (104 aa)). Residues Cys42, Cys48, Cys51, and Cys87 each coordinate [2Fe-2S] cluster.

This sequence belongs to the adrenodoxin/putidaredoxin family. Requires [2Fe-2S] cluster as cofactor.

Functionally, ferredoxin are iron-sulfur proteins that transfer electrons in a wide variety of metabolic reactions. This is 2Fe-2S ferredoxin (fdx) from Buchnera aphidicola subsp. Schizaphis graminum (strain Sg).